Consider the following 626-residue polypeptide: Chaperone protein HtpG (626 aa).

The segment at 1 to 341 (MAKKEFKAES…SEDLSLNISR (341 aa)) is a; substrate-binding. A b region spans residues 342-552 (EMLQHDRQLK…DGEVTIEMEK (211 aa)). The c stretch occupies residues 553-626 (ILNAMPDSQN…FTNNICKVMV (74 aa)).

Belongs to the heat shock protein 90 family. In terms of assembly, homodimer.

It is found in the cytoplasm. Functionally, molecular chaperone. Has ATPase activity. This chain is Chaperone protein HtpG, found in Bacillus subtilis (strain 168).